Consider the following 208-residue polypeptide: MARYTDSSCRICRRETMKLYLKGDRCYSDKCAVERRNYPPGQHGQGRGKFSDYGLQLREKQKIRRMYGLVEKQFKTYFKHADRQKGVTGTNFLTLLERRIDNTVYRLGFASSRAQARQLVRHSHFLVNGKKVNIPSFLLRPGDSVSVVEGSRQLQMINEAMEAMPRRGLPPWLELDKAKYEGVFKTLPTREEMNLPVQEQLVVEFYSK.

The S4 RNA-binding domain occupies 98–160 (RRIDNTVYRL…SRQLQMINEA (63 aa)).

It belongs to the universal ribosomal protein uS4 family. As to quaternary structure, part of the 30S ribosomal subunit. Contacts protein S5. The interaction surface between S4 and S5 is involved in control of translational fidelity.

One of the primary rRNA binding proteins, it binds directly to 16S rRNA where it nucleates assembly of the body of the 30S subunit. Its function is as follows. With S5 and S12 plays an important role in translational accuracy. The polypeptide is Small ribosomal subunit protein uS4 (Syntrophobacter fumaroxidans (strain DSM 10017 / MPOB)).